A 282-amino-acid polypeptide reads, in one-letter code: Putative phosphoesterase 244L (282 aa).

A divalent metal cation contacts are provided by Asp-45, Asn-80, and His-203.

Belongs to the metallophosphoesterase superfamily. IIV-6 244L family.

In Invertebrate iridescent virus 6 (IIV-6), this protein is Putative phosphoesterase 244L.